The primary structure comprises 345 residues: Phosphoribosylformylglycinamidine cyclo-ligase (345 aa).

Belongs to the AIR synthase family.

It localises to the cytoplasm. It catalyses the reaction 2-formamido-N(1)-(5-O-phospho-beta-D-ribosyl)acetamidine + ATP = 5-amino-1-(5-phospho-beta-D-ribosyl)imidazole + ADP + phosphate + H(+). Its pathway is purine metabolism; IMP biosynthesis via de novo pathway; 5-amino-1-(5-phospho-D-ribosyl)imidazole from N(2)-formyl-N(1)-(5-phospho-D-ribosyl)glycinamide: step 2/2. The protein is Phosphoribosylformylglycinamidine cyclo-ligase of Escherichia coli O127:H6 (strain E2348/69 / EPEC).